We begin with the raw amino-acid sequence, 360 residues long: MILLGSSGSIGKNVAFLAMKYGIKLDALACKTDYKELNSQISKFNPKFVYIEDNKLKNLVEHSRVFTSKDGIDKFLEACYDEFGSTVVINSLVGFSGLRPSLVSQKLGFKLALANKESLVAGGKFLDTKSINPIDSEHFGLKFLLKNRPAVKKMIITASGGAFYDMHINELEFVTAKSALKHPNWSMGAKITIDSATMANKLFEVLEAYHLYGIKDIDAFIERTSCIHALISFMDGSTTAHISRTDMKLAIAHAIGLEEKEILEPIDILSLKNISFNTINLKKYPIFTLKKDVLNNPDLGVIINAANEEMVYKFLNNEISFLDINRAVFKSLDKFGSVKIDDEDTVFEIDKKVREFCKGF.

NADPH contacts are provided by S7, G8, S9, I10, and N115. Residue K116 coordinates 1-deoxy-D-xylulose 5-phosphate. Residue E117 coordinates NADPH. Residue D135 coordinates Mn(2+). Positions 136, 137, 159, and 182 each coordinate 1-deoxy-D-xylulose 5-phosphate. Position 137 (E137) interacts with Mn(2+). Residue G188 coordinates NADPH. 1-deoxy-D-xylulose 5-phosphate contacts are provided by S195, N200, K201, and E204. E204 serves as a coordination point for Mn(2+).

It belongs to the DXR family. Requires Mg(2+) as cofactor. Mn(2+) serves as cofactor.

The enzyme catalyses 2-C-methyl-D-erythritol 4-phosphate + NADP(+) = 1-deoxy-D-xylulose 5-phosphate + NADPH + H(+). It participates in isoprenoid biosynthesis; isopentenyl diphosphate biosynthesis via DXP pathway; isopentenyl diphosphate from 1-deoxy-D-xylulose 5-phosphate: step 1/6. In terms of biological role, catalyzes the NADPH-dependent rearrangement and reduction of 1-deoxy-D-xylulose-5-phosphate (DXP) to 2-C-methyl-D-erythritol 4-phosphate (MEP). This chain is 1-deoxy-D-xylulose 5-phosphate reductoisomerase, found in Campylobacter fetus subsp. fetus (strain 82-40).